The following is a 432-amino-acid chain: Glutamyl-tRNA reductase (432 aa).

Substrate contacts are provided by residues 55–58, S114, 119–121, and Q125; these read TCNR and ETQ. Residue C56 is the Nucleophile of the active site. Position 194-199 (194-199) interacts with NADP(+); the sequence is GAGEMI.

This sequence belongs to the glutamyl-tRNA reductase family. In terms of assembly, homodimer.

The catalysed reaction is (S)-4-amino-5-oxopentanoate + tRNA(Glu) + NADP(+) = L-glutamyl-tRNA(Glu) + NADPH + H(+). It functions in the pathway porphyrin-containing compound metabolism; protoporphyrin-IX biosynthesis; 5-aminolevulinate from L-glutamyl-tRNA(Glu): step 1/2. Catalyzes the NADPH-dependent reduction of glutamyl-tRNA(Glu) to glutamate 1-semialdehyde (GSA). The sequence is that of Glutamyl-tRNA reductase from Burkholderia orbicola (strain MC0-3).